Reading from the N-terminus, the 148-residue chain is Large ribosomal subunit protein bL9 (148 aa).

It belongs to the bacterial ribosomal protein bL9 family.

Binds to the 23S rRNA. The protein is Large ribosomal subunit protein bL9 of Clostridium perfringens (strain ATCC 13124 / DSM 756 / JCM 1290 / NCIMB 6125 / NCTC 8237 / Type A).